Here is a 354-residue protein sequence, read N- to C-terminus: Glycerol-3-phosphate dehydrogenase [NAD(P)+] (354 aa).

Ser27, Phe28, Arg48, and Lys121 together coordinate NADPH. Residues Lys121 and Gly149 each contribute to the sn-glycerol 3-phosphate site. Ala153 contacts NADPH. Positions 204, 257, 267, 268, and 269 each coordinate sn-glycerol 3-phosphate. The active-site Proton acceptor is Lys204. NADPH is bound at residue Arg268. Positions 292 and 294 each coordinate NADPH.

This sequence belongs to the NAD-dependent glycerol-3-phosphate dehydrogenase family.

It localises to the cytoplasm. It carries out the reaction sn-glycerol 3-phosphate + NAD(+) = dihydroxyacetone phosphate + NADH + H(+). It catalyses the reaction sn-glycerol 3-phosphate + NADP(+) = dihydroxyacetone phosphate + NADPH + H(+). It participates in membrane lipid metabolism; glycerophospholipid metabolism. Functionally, catalyzes the reduction of the glycolytic intermediate dihydroxyacetone phosphate (DHAP) to sn-glycerol 3-phosphate (G3P), the key precursor for phospholipid synthesis. The polypeptide is Glycerol-3-phosphate dehydrogenase [NAD(P)+] (Pseudomonas fluorescens (strain Pf0-1)).